Reading from the N-terminus, the 202-residue chain is MAFNIITPGRVYSATSLTFVSTIKAAFVKPPLASPSRRNLLRFSSSPLSFPSLRRGFHGGRIVAMGSSAPESVNKPEEEWRAILSPEQFRILRQKGTEYPGTGEYNKVFDDGIYCCAGCGTPLYKSTTKFDSGCGWPAFFDGLPGAITRTPDPDGRRIEITCAACGGHLGHVFKGEGFPTPTDERHCVNSISLKFTPENPTL.

The transit peptide at 1 to 63 directs the protein to the chloroplast; sequence MAFNIITPGR…RRGFHGGRIV (63 aa). The region spanning 77-198 is the MsrB domain; the sequence is EEEWRAILSP…NSISLKFTPE (122 aa). Residues C116, C119, C162, and C165 each contribute to the Zn(2+) site. Residues C134 and C187 are joined by a disulfide bond. C187 acts as the Nucleophile in catalysis.

This sequence belongs to the MsrB Met sulfoxide reductase family. Zn(2+) serves as cofactor. Expressed in stems, young leaves, floral buds and flowers. Expressed at low levels in roots, mature leaves and siliques (at protein level).

Its subcellular location is the plastid. The protein localises to the chloroplast. It carries out the reaction L-methionyl-[protein] + [thioredoxin]-disulfide + H2O = L-methionyl-(R)-S-oxide-[protein] + [thioredoxin]-dithiol. Functionally, catalyzes the reduction of methionine sulfoxide (MetSO) to methionine in proteins. Specifically reduces the MetSO R-enantiomer. Plays a protective role against oxidative stress by restoring activity to proteins that have been inactivated by methionine oxidation. May play an essential function in association with MSRB1 in maintaining vegetative growth during environmental constraints, through the preservation of photosynthetic antennae. MSRB1 and MSRB2 account for most of the leaf peptide MSR capacity. The polypeptide is Peptide methionine sulfoxide reductase B2, chloroplastic (Arabidopsis thaliana (Mouse-ear cress)).